The primary structure comprises 156 residues: Small ribosomal subunit protein uS7 (156 aa).

The protein belongs to the universal ribosomal protein uS7 family. In terms of assembly, part of the 30S ribosomal subunit. Contacts proteins S9 and S11.

Functionally, one of the primary rRNA binding proteins, it binds directly to 16S rRNA where it nucleates assembly of the head domain of the 30S subunit. Is located at the subunit interface close to the decoding center, probably blocks exit of the E-site tRNA. The polypeptide is Small ribosomal subunit protein uS7 (Paraburkholderia phymatum (strain DSM 17167 / CIP 108236 / LMG 21445 / STM815) (Burkholderia phymatum)).